A 241-amino-acid chain; its full sequence is Fas-associated death domain protein (241 aa).

The tract at residues 1-101 is death-inducing; sequence MPGNHWYDIL…VNIYQEERLA (101 aa). Residues 151 to 237 form the Death domain; it reads RKRTAVFNKI…RNDIKRKVEQ (87 aa).

In terms of assembly, N-terminus interacts with Dredd. Interacts with imd.

The protein resides in the cytoplasm. Its function is as follows. Component of the IMD signaling pathway and is required for the host defense against Gram-negative bacteria. Interacts with Dredd, promotes cleavage of Dredd and is necessary and sufficient for enhancing Dredd-induced apoptosis. The polypeptide is Fas-associated death domain protein (Fadd) (Drosophila pseudoobscura pseudoobscura (Fruit fly)).